The sequence spans 137 residues: Ribosome-binding factor A (137 aa).

Belongs to the RbfA family. In terms of assembly, monomer. Binds 30S ribosomal subunits, but not 50S ribosomal subunits or 70S ribosomes.

Its subcellular location is the cytoplasm. Functionally, one of several proteins that assist in the late maturation steps of the functional core of the 30S ribosomal subunit. Associates with free 30S ribosomal subunits (but not with 30S subunits that are part of 70S ribosomes or polysomes). Required for efficient processing of 16S rRNA. May interact with the 5'-terminal helix region of 16S rRNA. In Cereibacter sphaeroides (strain KD131 / KCTC 12085) (Rhodobacter sphaeroides), this protein is Ribosome-binding factor A.